The chain runs to 400 residues: MAKQKFERTKPHVNIGTIGHVDHGKTTLTAAITMVLATVGKAQVKKYDEIDNAPEERERGITINTAHVEYETEKRHYAHVDCPGHADYVKNMITGAAQMDGAILVVSAADGPMPQTREHILLARQVGVPYIVVYLNKADMVDDPELLELVDMEVRELLSTYEFPGDEIPIITGSALKAMECACGKRECEWCKSIWELMDAVDEYIPTPQRAVDKPFLMPVEDVFSITGRGTVATGRIERGQVKVGDEVEIVGLQDKPRKTVVTGVEMFRKILDVGVAGDNVGCLLRGVDRKEIERGQVLAKPGSIKPHKSFSAEVYVLTKEEGGRHTPFFNGYRPQFYFRTTDVTGVVKLPEGVEMVMPGDNVRIDIDLITPIAIEEGLRFAIREGGRTVGAGVVTGIRE.

Residues 10-209 enclose the tr-type G domain; that stretch reads KPHVNIGTIG…AVDEYIPTPQ (200 aa). Residues 19–26 form a G1 region; that stretch reads GHVDHGKT. 19–26 provides a ligand contact to GTP; sequence GHVDHGKT. Mg(2+) is bound at residue threonine 26. The G2 stretch occupies residues 60–64; that stretch reads GITIN. The segment at 81–84 is G3; that stretch reads DCPG. Residues 81 to 85 and 136 to 139 each bind GTP; these read DCPGH and NKAD. A G4 region spans residues 136 to 139; it reads NKAD. Residues 174–176 form a G5 region; that stretch reads SAL.

The protein belongs to the TRAFAC class translation factor GTPase superfamily. Classic translation factor GTPase family. EF-Tu/EF-1A subfamily. Monomer.

Its subcellular location is the cytoplasm. It catalyses the reaction GTP + H2O = GDP + phosphate + H(+). Functionally, GTP hydrolase that promotes the GTP-dependent binding of aminoacyl-tRNA to the A-site of ribosomes during protein biosynthesis. In Pelotomaculum thermopropionicum (strain DSM 13744 / JCM 10971 / SI), this protein is Elongation factor Tu 1.